The primary structure comprises 112 residues: Putative iron-sulfur cluster insertion protein ErpA (112 aa).

Positions 40, 104, and 106 each coordinate iron-sulfur cluster.

This sequence belongs to the HesB/IscA family. As to quaternary structure, homodimer. It depends on iron-sulfur cluster as a cofactor.

Its function is as follows. Required for insertion of 4Fe-4S clusters. This is Putative iron-sulfur cluster insertion protein ErpA from Neisseria gonorrhoeae (strain ATCC 700825 / FA 1090).